Consider the following 481-residue polypeptide: MSKPIRVRYAPSPTGLLHIGNARTALFNYLYARRHGGTFIIRIEDTDRKRHVEDGERSQLENLKWLGMDWDESPETHENYRQSERLALYQQYIDQLLAEGKAYKSYVTEEELAAERERQEAAGETPRYINEFIGMSADEKAKYISEREAAGVVPTVRLAVNESGIYKWTDMVKGDIEFEGGNIGGDWVIQKKDGYPTYNFAVVVDDHDMQISHVIRGDDHIANTPKQLMVYEALGWEAPEFGHMTLIINSETGKKLSKRDTNTLQFIEDYRKKGYMPEAVFNFIALLGWNPGGEEEIFSREQLIALFDENRLSKSPAAFDQKKMDWMSNEYLKHADFETVYALCKPFLEEAGRLTEKAEKLVELYKPQLKSADEIIPLTDLFFSDFPELTEAEKEVMAGETVSTVLQAFKAKLEAMSDEDFKPENIFPQIKAVQKETGIKGKNLFMPIRIAVSGEMHGPELPNTIYLLGRDKSIEHIKNML.

Residues Pro11–Asn21 carry the 'HIGH' region motif. A 'KMSKS' region motif is present at residues Lys255–Arg259. Residue Lys258 coordinates ATP.

It belongs to the class-I aminoacyl-tRNA synthetase family. Glutamate--tRNA ligase type 1 subfamily. In terms of assembly, monomer.

It localises to the cytoplasm. The enzyme catalyses tRNA(Glu) + L-glutamate + ATP = L-glutamyl-tRNA(Glu) + AMP + diphosphate. Catalyzes the attachment of glutamate to tRNA(Glu) in a two-step reaction: glutamate is first activated by ATP to form Glu-AMP and then transferred to the acceptor end of tRNA(Glu). This chain is Glutamate--tRNA ligase, found in Streptococcus pyogenes serotype M4 (strain MGAS10750).